We begin with the raw amino-acid sequence, 165 residues long: V-type proton ATPase 16 kDa proteolipid subunit (165 aa).

Over 1-10 (MSSTFSGDET) the chain is Lumenal. The helical transmembrane segment at 11-33 (APFFGFLGAAAALVFSCMGAAYG) threads the bilayer. At 34 to 55 (TAKSGVGVASMGVMRPELVMKS) the chain is on the cytoplasmic side. Residues 56–76 (IVPVVMAGVLGIYGLIIAVII) form a helical membrane-spanning segment. At 77-95 (STGINPKAKSYYLFDGYAH) the chain is on the lumenal side. A helical membrane pass occupies residues 96-117 (LSSGLACGLAGLSAGMAIGIVG). Over 118–129 (DAGVRANAQQPK) the chain is Cytoplasmic. A helical membrane pass occupies residues 130-155 (LFVGMILILIFAEALALYGLIVGIIL). At 156-165 (SSRAGQSRAD) the chain is on the lumenal side.

Belongs to the V-ATPase proteolipid subunit family. In terms of assembly, V-ATPase is a heteromultimeric enzyme composed of a peripheral catalytic V1 complex (main components: subunits A, B, C, D, E, and F) attached to an integral membrane V0 proton pore complex (main component: the proteolipid protein; which is present as a hexamer that forms the proton-conducting pore). Higher expression in leaves, followed by roots and weakly in flowers. Expression in leaves is light-dependent.

The protein localises to the vacuole membrane. Functionally, proton-conducting pore forming subunit of the membrane integral V0 complex of vacuolar ATPase. V-ATPase is responsible for acidifying a variety of intracellular compartments in eukaryotic cells. Necessary for the crassulacean acid metabolism. The chain is V-type proton ATPase 16 kDa proteolipid subunit from Kalanchoe daigremontiana (Devil's backbone).